The primary structure comprises 427 residues: Trigger factor (427 aa).

One can recognise a PPIase FKBP-type domain in the interval 163-248; the sequence is GDTVVIDFVG…IHEVKAKEVP (86 aa).

The protein belongs to the FKBP-type PPIase family. Tig subfamily.

The protein resides in the cytoplasm. It carries out the reaction [protein]-peptidylproline (omega=180) = [protein]-peptidylproline (omega=0). Involved in protein export. Acts as a chaperone by maintaining the newly synthesized protein in an open conformation. Functions as a peptidyl-prolyl cis-trans isomerase. This Streptococcus suis (strain 98HAH33) protein is Trigger factor.